A 234-amino-acid chain; its full sequence is Small ribosomal subunit protein eS4 (234 aa).

The 62-residue stretch at Ile38–Arg99 folds into the S4 RNA-binding; degenerate domain.

It belongs to the eukaryotic ribosomal protein eS4 family.

The chain is Small ribosomal subunit protein eS4 (rps4e) from Picrophilus torridus (strain ATCC 700027 / DSM 9790 / JCM 10055 / NBRC 100828 / KAW 2/3).